A 332-amino-acid chain; its full sequence is Lipoyl synthase (332 aa).

Residues cysteine 74, cysteine 79, cysteine 85, cysteine 100, cysteine 104, cysteine 107, and serine 314 each contribute to the [4Fe-4S] cluster site. In terms of domain architecture, Radical SAM core spans 85–303 (CFGKGTATFM…EQEAYRMGFS (219 aa)).

It belongs to the radical SAM superfamily. Lipoyl synthase family. It depends on [4Fe-4S] cluster as a cofactor.

It is found in the cytoplasm. It carries out the reaction [[Fe-S] cluster scaffold protein carrying a second [4Fe-4S](2+) cluster] + N(6)-octanoyl-L-lysyl-[protein] + 2 oxidized [2Fe-2S]-[ferredoxin] + 2 S-adenosyl-L-methionine + 4 H(+) = [[Fe-S] cluster scaffold protein] + N(6)-[(R)-dihydrolipoyl]-L-lysyl-[protein] + 4 Fe(3+) + 2 hydrogen sulfide + 2 5'-deoxyadenosine + 2 L-methionine + 2 reduced [2Fe-2S]-[ferredoxin]. The protein operates within protein modification; protein lipoylation via endogenous pathway; protein N(6)-(lipoyl)lysine from octanoyl-[acyl-carrier-protein]: step 2/2. Its function is as follows. Catalyzes the radical-mediated insertion of two sulfur atoms into the C-6 and C-8 positions of the octanoyl moiety bound to the lipoyl domains of lipoate-dependent enzymes, thereby converting the octanoylated domains into lipoylated derivatives. The sequence is that of Lipoyl synthase from Verminephrobacter eiseniae (strain EF01-2).